Reading from the N-terminus, the 491-residue chain is Histamine H1 receptor (491 aa).

Residues 1 to 30 (MTCPNSSCVFEDKMCQGNKTAPANDAQLTP) lie on the Extracellular side of the membrane. Residues Asn-5 and Asn-18 are each glycosylated (N-linked (GlcNAc...) asparagine). Residues 31–51 (LVVVLSTISLVTVGLNLLVLY) form a helical membrane-spanning segment. Over 52–65 (AVRSERKLHTVGNL) the chain is Cytoplasmic. Residues 66–90 (YIVSLSVADLIVGVVVMPMNILYLL) form a helical membrane-spanning segment. Residues 91–98 (MSRWSLGR) lie on the Extracellular side of the membrane. A helical transmembrane segment spans residues 99–124 (PLCLFWLSMDYVASTASIFSVFILCI). An intrachain disulfide couples Cys-101 to Cys-181. Residues Asp-108 and Thr-113 each coordinate histamine. The segment at 108 to 113 (DYVAST) is important for agonist binding. The Cytoplasmic portion of the chain corresponds to 125–145 (DRYRSVQQPLKYLRYRTKTRA). 2 positions are modified to phosphothreonine: Thr-141 and Thr-143. Residues 146–165 (SITILAAWFLSFLWIIPILG) traverse the membrane as a helical segment. At 166–189 (WRHFQPKTPEPREDKCETDFYNVT) the chain is on the extracellular side. Residues 190–212 (WFKVMTAIINFYLPTLLMLWFYA) traverse the membrane as a helical segment. Asn-199 contributes to the histamine binding site. Topologically, residues 213–420 (KIYKAVRQHC…MNRERKAAKQ (208 aa)) are cytoplasmic. Ser-231 is subject to Phosphoserine. Disordered stretches follow at residues 246 to 297 (QVGA…KEEK) and 360 to 385 (QSFS…SESS). Positions 252 to 262 (PGKESPWEVLK) are enriched in basic and acidic residues. Phosphoserine is present on residues Ser-384, Ser-400, and Ser-402. A helical transmembrane segment spans residues 421–444 (LGFIMAAFIICWIPYFIFFMVIAF). The tract at residues 428-432 (FIICW) is important for agonist binding. Tyr-435 serves as a coordination point for histamine. Cys-445 and Cys-448 are oxidised to a cystine. Over 445 to 450 (CESCCN) the chain is Extracellular. The chain crosses the membrane as a helical span at residues 451–473 (QHVHMFTIWLGYINSTLNPLIYP). Residues 474-491 (LCNENFKKTFKKILHIRS) lie on the Cytoplasmic side of the membrane.

The protein belongs to the G-protein coupled receptor 1 family. Post-translationally, phosphorylation at sites in the second and third cytoplasmic loops independently contribute to agonist-induced receptor down-regulation. In terms of tissue distribution, brain, lung, small intestine, uterus, adrenal medulla and spleen.

The protein localises to the cell membrane. G-protein-coupled receptor for histamine, a biogenic amine that functions as an immune modulator and a neurotransmitter. Through the H1 receptor, histamine mediates the contraction of smooth muscles and increases capillary permeability due to contraction of terminal venules. Also mediates neurotransmission in the central nervous system and thereby regulates circadian rhythms, emotional and locomotor activities as well as cognitive functions. The sequence is that of Histamine H1 receptor from Bos taurus (Bovine).